The following is a 638-amino-acid chain: MISARWLYCLVLLLATESCRLFCQAASKSKENVMPRPHDVCDGVCKNNASPCFQSCPPNSEGNMKFACKAKRWHKVTETCHTLNAHSIFEEDKELYSVQSSESTIRTHMFNSGLKTITDTLMEKCPKDLSCVIRGIEKSPRIPGNIAVVVQLLHNISTTLTKGVDEEKMQSYSAMANHILNSKSISNWTFIQDRNSSCVLLQSINSFASNLFMKGHLINISHVFIHTLGTVVPRNSLGKNFTFSMRVNDTSDKVTGRILLTTEELQKVPSAFQVISIAFPTLGAILEASLLENMTVNGLVLSVILPKELKNISLIFEKIRKSGERKSQCVGWHSLESRWDRRACKMIQENSRQAICRCQPNKFFTSFSILMSPNTVESPVLTYITYIGLGISICSLIICLAIEALVWSQVTKTEISYLRHLCIANIAVTLLMADVWFIVASFLSGPIVHHNGCVTATFFVHFFYLSVFFWMLAKALLILYGILIVFHTLPKSCLVASLFTVGYGCPLVIAVITLAVTEPGKGYLRPEACWLNWDMTKALLAFVVPALAIVVVNLITVTLVIIKTQRAAVGSSMFQEVRAIVRICKNIAILTPLLGLTWGFGIATVVAGHSLAFHIIFSLLNALQVSPDAMIESEWRGC.

The first 25 residues, 1 to 25 (MISARWLYCLVLLLATESCRLFCQA), serve as a signal peptide directing secretion. The Extracellular portion of the chain corresponds to 26 to 386 (ASKSKENVMP…ESPVLTYITY (361 aa)). N-linked (GlcNAc...) asparagine glycosylation is found at asparagine 155, asparagine 219, asparagine 248, asparagine 293, and asparagine 311. The GAIN-B domain occupies 233–377 (PRNSLGKNFT…SILMSPNTVE (145 aa)). 2 disulfides stabilise this stretch: cysteine 329/cysteine 356 and cysteine 344/cysteine 358. A GPS region spans residues 329-377 (CVGWHSLESRWDRRACKMIQENSRQAICRCQPNKFFTSFSILMSPNTVE). Residues 387-407 (IGLGISICSLIICLAIEALVW) traverse the membrane as a helical segment. At 408–422 (SQVTKTEISYLRHLC) the chain is on the cytoplasmic side. A helical membrane pass occupies residues 423–443 (IANIAVTLLMADVWFIVASFL). Residues 444–465 (SGPIVHHNGCVTATFFVHFFYL) lie on the Extracellular side of the membrane. Residues 466 to 486 (SVFFWMLAKALLILYGILIVF) form a helical membrane-spanning segment. The Cytoplasmic portion of the chain corresponds to 487–493 (HTLPKSC). The helical transmembrane segment at 494-514 (LVASLFTVGYGCPLVIAVITL) threads the bilayer. The Extracellular segment spans residues 515-541 (AVTEPGKGYLRPEACWLNWDMTKALLA). The helical transmembrane segment at 542 to 562 (FVVPALAIVVVNLITVTLVII) threads the bilayer. At 563-586 (KTQRAAVGSSMFQEVRAIVRICKN) the chain is on the cytoplasmic side. Residues 587–607 (IAILTPLLGLTWGFGIATVVA) traverse the membrane as a helical segment. At 608–610 (GHS) the chain is on the extracellular side. A helical transmembrane segment spans residues 611-631 (LAFHIIFSLLNALQVSPDAMI). At 632 to 638 (ESEWRGC) the chain is on the cytoplasmic side.

The protein belongs to the G-protein coupled receptor 2 family. Adhesion G-protein coupled receptor (ADGR) subfamily.

Its subcellular location is the membrane. Its function is as follows. Orphan receptor. The chain is Adhesion G-protein coupled receptor F2 (Adgrf2) from Rattus norvegicus (Rat).